The primary structure comprises 892 residues: UPF0182 protein MCA2716 (892 aa).

A run of 7 helical transmembrane segments spans residues 7–27 (LLTS…AIVL), 57–77 (ILSG…FWAA), 107–127 (GALP…ALPF), 163–183 (ILVL…VMVA), 206–226 (IHLN…YVLQ), 252–272 (LPLI…ALWF), and 281–301 (LALT…IDVV).

The protein belongs to the UPF0182 family.

It localises to the cell membrane. In Methylococcus capsulatus (strain ATCC 33009 / NCIMB 11132 / Bath), this protein is UPF0182 protein MCA2716.